The chain runs to 142 residues: Type IV pilus subunit protein TapA (142 aa).

Positions 1 to 6 (MKKQSG) are cleaved as a propeptide — leader sequence. Phe-7 bears the N-methylphenylalanine mark. A helical transmembrane segment spans residues 7–27 (FTLIELMIVVAIVAILAAIAL).

Belongs to the N-Me-Phe pilin family.

It is found in the membrane. Major component of the type IV (TAP) pilus. Aeromonas hydrophila possesses two distinct families of type IV pili: the bundle-forming pilus (Bfp) and the type IV pilus (Tap). The polypeptide is Type IV pilus subunit protein TapA (tapA) (Aeromonas hydrophila).